The chain runs to 97 residues: Co-chaperonin GroES (97 aa).

The protein belongs to the GroES chaperonin family. Heptamer of 7 subunits arranged in a ring. Interacts with the chaperonin GroEL.

Its subcellular location is the cytoplasm. Its function is as follows. Together with the chaperonin GroEL, plays an essential role in assisting protein folding. The GroEL-GroES system forms a nano-cage that allows encapsulation of the non-native substrate proteins and provides a physical environment optimized to promote and accelerate protein folding. GroES binds to the apical surface of the GroEL ring, thereby capping the opening of the GroEL channel. The polypeptide is Co-chaperonin GroES (Buchnera aphidicola subsp. Baizongia pistaciae (strain Bp)).